Here is a 117-residue protein sequence, read N- to C-terminus: Small ribosomal subunit protein bS6m (117 aa).

This sequence belongs to the bacterial ribosomal protein bS6 family. In terms of assembly, component of the mitochondrial small ribosomal subunit (mt-SSU). Mature N.crassa 74S mitochondrial ribosomes consist of a small (37S) and a large (54S) subunit. The 37S small subunit contains a 16S ribosomal RNA (16S mt-rRNA) and 32 different proteins. The 54S large subunit contains a 23S rRNA (23S mt-rRNA) and 42 different proteins.

It is found in the mitochondrion. In terms of biological role, component of the mitochondrial ribosome (mitoribosome), a dedicated translation machinery responsible for the synthesis of mitochondrial genome-encoded proteins, including at least some of the essential transmembrane subunits of the mitochondrial respiratory chain. The mitoribosomes are attached to the mitochondrial inner membrane and translation products are cotranslationally integrated into the membrane. In Neurospora crassa (strain ATCC 24698 / 74-OR23-1A / CBS 708.71 / DSM 1257 / FGSC 987), this protein is Small ribosomal subunit protein bS6m (mrp17).